The chain runs to 252 residues: Carbohydrate deacetylase (252 aa).

Mg(2+)-binding residues include histidine 59 and histidine 122.

Belongs to the YdjC deacetylase family. Homodimer. Requires Mg(2+) as cofactor.

Its function is as follows. Probably catalyzes the deacetylation of acetylated carbohydrates an important step in the degradation of oligosaccharides. This is Carbohydrate deacetylase from Vibrio vulnificus (strain CMCP6).